Here is a 469-residue protein sequence, read N- to C-terminus: Ribulose bisphosphate carboxylase large chain (469 aa).

A propeptide spanning residues 1–2 is cleaved from the precursor; the sequence is MS. P3 is subject to N-acetylproline. Residue K14 is modified to N6,N6,N6-trimethyllysine. Positions 123 and 173 each coordinate substrate. Catalysis depends on K175, which acts as the Proton acceptor. K177 is a substrate binding site. Positions 201, 203, and 204 each coordinate Mg(2+). Position 201 is an N6-carboxylysine (K201). H294 acts as the Proton acceptor in catalysis. Residues R295, H327, and S379 each coordinate substrate.

It belongs to the RuBisCO large chain family. Type I subfamily. In terms of assembly, heterohexadecamer of 8 large chains and 8 small chains; disulfide-linked. The disulfide link is formed within the large subunit homodimers. The cofactor is Mg(2+). Post-translationally, the disulfide bond which can form in the large chain dimeric partners within the hexadecamer appears to be associated with oxidative stress and protein turnover.

The protein resides in the plastid. It is found in the chloroplast. The enzyme catalyses 2 (2R)-3-phosphoglycerate + 2 H(+) = D-ribulose 1,5-bisphosphate + CO2 + H2O. The catalysed reaction is D-ribulose 1,5-bisphosphate + O2 = 2-phosphoglycolate + (2R)-3-phosphoglycerate + 2 H(+). Functionally, ruBisCO catalyzes two reactions: the carboxylation of D-ribulose 1,5-bisphosphate, the primary event in carbon dioxide fixation, as well as the oxidative fragmentation of the pentose substrate in the photorespiration process. Both reactions occur simultaneously and in competition at the same active site. The polypeptide is Ribulose bisphosphate carboxylase large chain (Brexia madagascariensis).